The following is a 308-amino-acid chain: S-adenosylmethionine-dependent nucleotide dehydratase (308 aa).

One can recognise a Radical SAM core domain in the interval 7-253; that stretch reads SIQELVINFH…WQSYLMINPE (247 aa). C21, C25, and C28 together coordinate [4Fe-4S] cluster.

It belongs to the radical SAM superfamily. Viperin family. The cofactor is [4Fe-4S] cluster.

It catalyses the reaction CTP + AH2 + S-adenosyl-L-methionine = 3'-deoxy-3',4'-didehydro-CTP + 5'-deoxyadenosine + L-methionine + A + H2O + H(+). It carries out the reaction GTP + AH2 + S-adenosyl-L-methionine = 3'-deoxy-3',4'-didehydro-GTP + 5'-deoxyadenosine + L-methionine + A + H2O + H(+). The enzyme catalyses UTP + AH2 + S-adenosyl-L-methionine = 3'-deoxy-3',4'-didehydro-UTP + 5'-deoxyadenosine + L-methionine + A + H2O + H(+). Functionally, expression of pVip58 in E.coli (strain MG1655) confers resistance to phages lambda, P1 and T7; delays culture collapse upon infection with T7. Catalyzes the conversion of cytidine triphosphate (CTP) to 3'-deoxy-3',4'-didehydro-CTP (ddhCTP), guanosine triphosphate (GTP) to 3'-deoxy-3',4'-didehydro-GTP (ddhGTP) and uridine triphosphate (UTP) to 3'-deoxy-3',4'-didehydro-UTP (ddhUTP), probably via a SAM-dependent radical mechanism. The modified nucleotide represses transcription from T7 RNA polymerase-directed genes (possibly by acting as chain terminators), strongly suggesting these nucleotides block viral polymerase transcription. This is S-adenosylmethionine-dependent nucleotide dehydratase from Pseudoalteromonas ulvae.